We begin with the raw amino-acid sequence, 683 residues long: MRGCLQLARWLSAAPKGTAASLTRAPFVLANAPRFFTSSASHAGSRSTATKPVSDLENRIAAIPIERYRNFCIVAHVDHGKSTLSDRLLELTGTIEPGSNKQVLDKLDVERERGITVKAQTCSMIYNHNGEDYLLHLVDTPGHVDFRAEVSRSYASCGGALLLVDASQGIQAQTVANFYLAFAQGLELIPVINKVDLPSAEPERALEQMKNSFELDTENAVMVSAKTGLNVEKLLPTVIEKIPAYGYFPVYLHKLFPLLTLTSPIGDCKKPLRMLLVDSWYDSYKGVICLVRIFDGEIRAGQQVVSFATGLKYYVGEVGIMYPNETPQSVLRAGQVGYIYFNPGMKRSKEAKIGDTFTRVGFEKAVEPLPGFEEPKSMVFVAAYPVDADHFEHLEDSINQLVLNDRSITVQKESSEALGAGFRLGFLGTLHCSVFEDRLRQEHGASIIITPPSVPVKIIWKDGKEEIITSPAKFPEDEELRSKVAEIQEPYVLATLTFPEEYLGKVIELCEANRGEQKSLEYFTATQVILKYELPLAQLVDDFFGKLKGSTKGYASLDYEESAWQTGNIVKLQLLVNKAPVDAVARIVHLSQVERLGRQWVTKFKEHVDRQLFEVVIQAAVGKKIIARETVKPYRKDVLAKLHASDVSRRRKLLEKQKEGRKRLRAVGNVVIEHKAFQAFLAK.

The N-terminal 43 residues, 1–43, are a transit peptide targeting the mitochondrion; the sequence is MRGCLQLARWLSAAPKGTAASLTRAPFVLANAPRFFTSSASHA. One can recognise a tr-type G domain in the interval 66 to 250; the sequence is ERYRNFCIVA…KIPAYGYFPV (185 aa). Residues 75 to 82, 139 to 143, and 193 to 196 each bind GTP; these read AHVDHGKS, DTPGH, and NKVD.

The protein belongs to the TRAFAC class translation factor GTPase superfamily. Classic translation factor GTPase family. LepA subfamily.

Its subcellular location is the mitochondrion inner membrane. The enzyme catalyses GTP + H2O = GDP + phosphate + H(+). Functionally, promotes mitochondrial protein synthesis. May act as a fidelity factor of the translation reaction, by catalyzing a one-codon backward translocation of tRNAs on improperly translocated ribosomes. Binds to mitochondrial ribosomes in a GTP-dependent manner. The polypeptide is Translation factor guf1, mitochondrial (guf1) (Neosartorya fischeri (strain ATCC 1020 / DSM 3700 / CBS 544.65 / FGSC A1164 / JCM 1740 / NRRL 181 / WB 181) (Aspergillus fischerianus)).